The sequence spans 212 residues: Thymidylate kinase (212 aa).

Residues 16–21 (RAGKTT), arginine 97, arginine 182, and lysine 192 contribute to the ATP site.

This sequence belongs to the thymidylate kinase family. Requires Mg(2+) as cofactor.

The catalysed reaction is dTMP + ATP = dTDP + ADP. It functions in the pathway pyrimidine metabolism; dTTP biosynthesis. Functionally, catalyzes the phosphorylation of thymidine monophosphate (dTMP) to thymidine diphosphate (dTDP), the immediate precursor for the DNA building block dTTP, with ATP as the preferred phosphoryl donor in the presence of Mg(2+). This chain is Thymidylate kinase (dtymk), found in Danio rerio (Zebrafish).